Reading from the N-terminus, the 348-residue chain is MKPIKVLIIDDSALIRSLLREMITSDPRLEVCGAAEDPYQAREMIKQLNPHVLTLDIEMPRMNGISFLKNLMRLHPLPVVMISTLTQVGAPETLEALSLGAVDFIGKPKQHSDLGLSQYRDEIIRKLICAAGANVTAMEGVGKAKATGLDAVAQSKSLKTGFLCAIGASTGGTEAIKAVVSSLPLNSPPIVVTQHIPPAFSTSFAKRLDGASAVKVYEAQHQQPIEKGCVYIAPGDAHLKVSKTAKGYICLLDSGEMVNRHRPSVEVLFDSVCEQVGNKAMGVILTGMGADGAEALKRMRDAGSHTIAQDEATSIVWGMPGAAVKLDAAAEVLPLNKVAANIIKHALK.

Residues 5–122 enclose the Response regulatory domain; sequence KVLIIDDSAL…DLGLSQYRDE (118 aa). Residue Asp56 is modified to 4-aspartylphosphate. One can recognise a CheB-type methylesterase domain in the interval 157–348; that stretch reads SLKTGFLCAI…AANIIKHALK (192 aa). Active-site residues include Ser169, His195, and Asp291.

This sequence belongs to the CheB family. In terms of processing, phosphorylated by CheA. Phosphorylation of the N-terminal regulatory domain activates the methylesterase activity.

The protein localises to the cytoplasm. The catalysed reaction is [protein]-L-glutamate 5-O-methyl ester + H2O = L-glutamyl-[protein] + methanol + H(+). It catalyses the reaction L-glutaminyl-[protein] + H2O = L-glutamyl-[protein] + NH4(+). Functionally, involved in chemotaxis. Part of a chemotaxis signal transduction system that modulates chemotaxis in response to various stimuli. Catalyzes the demethylation of specific methylglutamate residues introduced into the chemoreceptors (methyl-accepting chemotaxis proteins or MCP) by CheR. Also mediates the irreversible deamidation of specific glutamine residues to glutamic acid. The sequence is that of Protein-glutamate methylesterase/protein-glutamine glutaminase 2 from Saccharophagus degradans (strain 2-40 / ATCC 43961 / DSM 17024).